Reading from the N-terminus, the 499-residue chain is Bifunctional purine biosynthesis protein PurH (499 aa).

The MGS-like domain occupies 1-144 (MIKRALISVF…KNFKDVVVLT (144 aa)).

Belongs to the PurH family.

The enzyme catalyses (6R)-10-formyltetrahydrofolate + 5-amino-1-(5-phospho-beta-D-ribosyl)imidazole-4-carboxamide = 5-formamido-1-(5-phospho-D-ribosyl)imidazole-4-carboxamide + (6S)-5,6,7,8-tetrahydrofolate. The catalysed reaction is IMP + H2O = 5-formamido-1-(5-phospho-D-ribosyl)imidazole-4-carboxamide. It participates in purine metabolism; IMP biosynthesis via de novo pathway; 5-formamido-1-(5-phospho-D-ribosyl)imidazole-4-carboxamide from 5-amino-1-(5-phospho-D-ribosyl)imidazole-4-carboxamide (10-formyl THF route): step 1/1. Its pathway is purine metabolism; IMP biosynthesis via de novo pathway; IMP from 5-formamido-1-(5-phospho-D-ribosyl)imidazole-4-carboxamide: step 1/1. The chain is Bifunctional purine biosynthesis protein PurH from Clostridium botulinum (strain Okra / Type B1).